Consider the following 303-residue polypeptide: Acetyl-coenzyme A carboxylase carboxyl transferase subunit beta (303 aa).

Residues 25–294 form the CoA carboxyltransferase N-terminal domain; it reads LWIKCPETGE…NDVSAKSLNG (270 aa).

Belongs to the AccD/PCCB family. As to quaternary structure, acetyl-CoA carboxylase is a heterohexamer composed of biotin carboxyl carrier protein (AccB), biotin carboxylase (AccC) and two subunits each of ACCase subunit alpha (AccA) and ACCase subunit beta (AccD).

Its subcellular location is the cytoplasm. It carries out the reaction N(6)-carboxybiotinyl-L-lysyl-[protein] + acetyl-CoA = N(6)-biotinyl-L-lysyl-[protein] + malonyl-CoA. It participates in lipid metabolism; malonyl-CoA biosynthesis; malonyl-CoA from acetyl-CoA: step 1/1. Functionally, component of the acetyl coenzyme A carboxylase (ACC) complex. Biotin carboxylase (BC) catalyzes the carboxylation of biotin on its carrier protein (BCCP) and then the CO(2) group is transferred by the transcarboxylase to acetyl-CoA to form malonyl-CoA. The protein is Acetyl-coenzyme A carboxylase carboxyl transferase subunit beta of Rhizobium rhizogenes (strain K84 / ATCC BAA-868) (Agrobacterium radiobacter).